The chain runs to 175 residues: CASP-like protein 2C1 (175 aa).

Topologically, residues 1–7 (MVKLRET) are cytoplasmic. Residues 8–28 (EVILRLCIVFFLLLTSCLIGL) form a helical membrane-spanning segment. The Extracellular segment spans residues 29 to 45 (DSQTKEIAYIHKNVSFR). Asn41 carries N-linked (GlcNAc...) asparagine glycosylation. Residues 46-66 (YLLALEAELYIDVVVAAYNLV) traverse the membrane as a helical segment. Residues 67–91 (QLGLGWYNVEQKTSNPKWFSYLLDQ) lie on the Cytoplasmic side of the membrane. A helical transmembrane segment spans residues 92–112 (TAAYVVFAGTSAAAQHSLLVV). Over 113 to 136 (TGSRELQWMKWCYKFTRFCFQMGS) the chain is Extracellular. A helical transmembrane segment spans residues 137–157 (AIILNYIAAALMVLLSSISAF). Topologically, residues 158–175 (NLFRLYSPKRFFRFKSSS) are cytoplasmic.

It belongs to the Casparian strip membrane proteins (CASP) family. Homodimer and heterodimers.

The protein resides in the cell membrane. The sequence is that of CASP-like protein 2C1 from Arabidopsis thaliana (Mouse-ear cress).